Reading from the N-terminus, the 229-residue chain is Extracellular small neutral protease (229 aa).

The first 28 residues, 1–28 (MRMPLSVLTAAGLSLATLGLGTAGPASA), serve as a signal peptide directing secretion. Positions 29–81 (TPTAEGAPVVAYDGSPSAGSPADAKAEAAANRAFFEAVLRSVAEKRAANPKST) are excised as a propeptide. Ca(2+) contacts are provided by aspartate 159 and threonine 161. A Zn(2+)-binding site is contributed by histidine 166. Residue glutamate 167 is part of the active site. Zn(2+) is bound by residues histidine 170 and aspartate 176. A disulfide bridge connects residues cysteine 182 and cysteine 195.

It belongs to the peptidase M7 family. Monomer. Requires Ca(2+) as cofactor. It depends on Zn(2+) as a cofactor.

It localises to the secreted. The enzyme catalyses Hydrolyzes proteins with a preference for Tyr or Phe in the P1' position. Has no action on amino-acid p-nitroanilides.. In terms of biological role, milk hydrolyzing. This Streptomyces sp. (strain C5) protein is Extracellular small neutral protease (snpA).